The sequence spans 607 residues: Arginine--tRNA ligase, cytoplasmic (607 aa).

At Ala2 the chain carries N-acetylalanine. The residue at position 15 (Ser15) is a Phosphoserine. Interaction with tRNA regions lie at residues 59 to 60 (EW) and 106 to 111 (NGPFIQ). L-arginine-binding positions include 148 to 153 (EFSSPN), His162, Tyr347, Asp351, and Gln375. Positions 151–162 (SPNIAKPFHAGH) match the 'HIGH' region motif. An interaction with tRNA region spans residues 484-498 (DTGPYLQYAHSRLRS).

The protein belongs to the class-I aminoacyl-tRNA synthetase family. In terms of assembly, monomer.

The protein localises to the cytoplasm. The protein resides in the cytosol. It carries out the reaction tRNA(Arg) + L-arginine + ATP = L-arginyl-tRNA(Arg) + AMP + diphosphate. Functionally, forms part of a macromolecular complex that catalyzes the attachment of specific amino acids to cognate tRNAs during protein synthesis. This is Arginine--tRNA ligase, cytoplasmic from Saccharomyces cerevisiae (strain ATCC 204508 / S288c) (Baker's yeast).